Consider the following 932-residue polypeptide: DNA mismatch repair protein MutS (932 aa).

615–622 (GPNMAGKS) contacts ATP.

It belongs to the DNA mismatch repair MutS family.

This protein is involved in the repair of mismatches in DNA. It is possible that it carries out the mismatch recognition step. This protein has a weak ATPase activity. This Clostridium botulinum (strain Okra / Type B1) protein is DNA mismatch repair protein MutS.